Consider the following 367-residue polypeptide: Glutamate 5-kinase (367 aa).

An ATP-binding site is contributed by K10. Residues S50, D137, and N149 each contribute to the substrate site. ATP contacts are provided by residues 169-170 and 211-217; these read TD and TGGMATK. One can recognise a PUA domain in the interval 275–353; sequence AGVIIVDNGA…QEISQILGYE (79 aa).

It belongs to the glutamate 5-kinase family.

Its subcellular location is the cytoplasm. The enzyme catalyses L-glutamate + ATP = L-glutamyl 5-phosphate + ADP. Its pathway is amino-acid biosynthesis; L-proline biosynthesis; L-glutamate 5-semialdehyde from L-glutamate: step 1/2. Functionally, catalyzes the transfer of a phosphate group to glutamate to form L-glutamate 5-phosphate. The polypeptide is Glutamate 5-kinase (Proteus mirabilis (strain HI4320)).